The following is a 340-amino-acid chain: Glyceraldehyde-3-phosphate dehydrogenase, cytosolic (340 aa).

Residues R16–I17, D38, and R85 contribute to the NAD(+) site. Residues S156 to T158, T187, T216 to G217, and R239 each bind D-glyceraldehyde 3-phosphate. C157 serves as the catalytic Nucleophile. Residue N321 coordinates NAD(+).

The protein belongs to the glyceraldehyde-3-phosphate dehydrogenase family. Homotetramer.

The protein localises to the cytoplasm. It carries out the reaction D-glyceraldehyde 3-phosphate + phosphate + NAD(+) = (2R)-3-phospho-glyceroyl phosphate + NADH + H(+). Its pathway is carbohydrate degradation; glycolysis; pyruvate from D-glyceraldehyde 3-phosphate: step 1/5. Key enzyme in glycolysis that catalyzes the first step of the pathway by converting D-glyceraldehyde 3-phosphate (G3P) into 3-phospho-D-glyceroyl phosphate. Essential for the maintenance of cellular ATP levels and carbohydrate metabolism. This chain is Glyceraldehyde-3-phosphate dehydrogenase, cytosolic (GAPC), found in Pinus sylvestris (Scotch pine).